A 164-amino-acid chain; its full sequence is 5-formyltetrahydrofolate cyclo-ligase (164 aa).

Position 3-7 (3-7 (KNALR)) interacts with ATP. Substrate contacts are provided by Glu-50 and Glu-55. Position 115 to 123 (115 to 123 (RLGFGKGYY)) interacts with ATP. A Mg(2+)-binding site is contributed by Asp-124. The ATP site is built by Arg-125 and Trp-153. A Mg(2+)-binding site is contributed by Asp-154.

It belongs to the 5-formyltetrahydrofolate cyclo-ligase family. Monomer or homodimer. It depends on Mg(2+) as a cofactor. Mn(2+) serves as cofactor. The cofactor is Ca(2+). Zn(2+) is required as a cofactor. Requires Fe(2+) as cofactor. It depends on Co(2+) as a cofactor. Cu(2+) serves as cofactor.

It localises to the cytoplasm. It carries out the reaction (6S)-5-formyl-5,6,7,8-tetrahydrofolate + ATP = (6R)-5,10-methenyltetrahydrofolate + ADP + phosphate. Functionally, involved in folate metabolism. Catalyzes the irreversible conversion of 5-formyltetrahydrofolate (5-FTHF) to yield 5,10-methenyltetrahydrofolate. This Mycoplasma pneumoniae (strain ATCC 29342 / M129 / Subtype 1) (Mycoplasmoides pneumoniae) protein is 5-formyltetrahydrofolate cyclo-ligase.